Consider the following 490-residue polypeptide: Betaine aldehyde dehydrogenase (490 aa).

D93 contacts K(+). 150-152 (GAW) contributes to the NAD(+) binding site. Catalysis depends on K162, which acts as the Charge relay system. 176-179 (KPSE) provides a ligand contact to NAD(+). V180 is a binding site for K(+). 230 to 233 (GIAS) contacts NAD(+). L246 serves as a coordination point for K(+). The active-site Proton acceptor is the E252. NAD(+) is bound by residues G254, C286, and E387. C286 functions as the Nucleophile in the catalytic mechanism. C286 is modified (cysteine sulfenic acid (-SOH)). 2 residues coordinate K(+): K457 and G460. E464 (charge relay system) is an active-site residue.

This sequence belongs to the aldehyde dehydrogenase family. Dimer of dimers. K(+) is required as a cofactor.

It catalyses the reaction betaine aldehyde + NAD(+) + H2O = glycine betaine + NADH + 2 H(+). Its pathway is amine and polyamine biosynthesis; betaine biosynthesis via choline pathway; betaine from betaine aldehyde: step 1/1. In terms of biological role, involved in the biosynthesis of the osmoprotectant glycine betaine. Catalyzes the irreversible oxidation of betaine aldehyde to the corresponding acid. In Yersinia pseudotuberculosis serotype I (strain IP32953), this protein is Betaine aldehyde dehydrogenase.